Here is a 551-residue protein sequence, read N- to C-terminus: ATPase expression protein 2, mitochondrial (551 aa).

Positions A530–W551 are disordered.

It belongs to the AEP2 family. In terms of assembly, binds to the 5'UTR of the OLI1 mRNA.

It is found in the mitochondrion. Its function is as follows. Required for translation of the mitochondrial OLI1 transcript coding for the mitochondrial ATP synthase subunit 9. The chain is ATPase expression protein 2, mitochondrial (AEP2) from Lachancea thermotolerans (strain ATCC 56472 / CBS 6340 / NRRL Y-8284) (Yeast).